The following is a 72-amino-acid chain: METQKLVSMISEALEKYQYPLSAKNIKAVIQKEHNVILPVGSINSILYSYTELFEKIDKTNTIYPPLWIRKN.

The protein belongs to the asfivirus I73R family.

It is found in the virion. This is an uncharacterized protein from Ornithodoros (relapsing fever ticks).